The following is a 418-amino-acid chain: Secreted aspartic protease 6 (418 aa).

The first 18 residues, 1–18, serve as a signal peptide directing secretion; sequence MFLKNILSVLRFALLIDA. A propeptide spans 19–76 (activation peptide); the sequence is APVKRSPGFVTLDFNVKRSLVVPDDPTAESKRSPLFLDLDPTQIPVDDTGRNVGVDKR. Residues 90-404 enclose the Peptidase A1 domain; the sequence is YSADITVGSN…DLDDKKISMA (315 aa). The active site involves D108. Residue 108–110 coordinates pepstatin A; that stretch reads DTG. Residues C123 and C135 are joined by a disulfide bond. N138 carries an N-linked (GlcNAc...) asparagine glycan. D268 contributes to the Zn(2+) binding site. Residue D294 is part of the active site. 294–298 contacts pepstatin A; it reads DSGTT. C332 and C370 are disulfide-bonded.

Belongs to the peptidase A1 family.

It is found in the secreted. It carries out the reaction Preferential cleavage at the carboxyl of hydrophobic amino acids, but fails to cleave 15-Leu-|-Tyr-16, 16-Tyr-|-Leu-17 and 24-Phe-|-Phe-25 of insulin B chain. Activates trypsinogen, and degrades keratin.. With respect to regulation, inhibited by pepstatin A analogs. Its function is as follows. Secreted aspartic peptidases (SAPs) are a group of ten acidic hydrolases considered as key virulence factors. These enzymes supply the fungus with nutrient amino acids as well as are able to degrade the selected host's proteins involved in the immune defense. Moreover, acts toward human hemoglobin though limited proteolysis to generate a variety of antimicrobial hemocidins, enabling to compete with the other microorganisms of the same physiological niche using the microbicidal peptides generated from the host protein. This is Secreted aspartic protease 6 from Candida albicans (Yeast).